Here is a 242-residue protein sequence, read N- to C-terminus: Succinyl-CoA:3-ketoacid coenzyme A transferase subunit A (242 aa).

Residue 33 to 39 (GGFGLCG) participates in CoA binding.

This sequence belongs to the 3-oxoacid CoA-transferase subunit A family. As to quaternary structure, heterodimer of a subunit A and a subunit B.

The catalysed reaction is a 3-oxo acid + succinyl-CoA = a 3-oxoacyl-CoA + succinate. Its pathway is bacterial outer membrane biogenesis; lipopolysaccharide biosynthesis. This Xanthomonas campestris pv. campestris (strain ATCC 33913 / DSM 3586 / NCPPB 528 / LMG 568 / P 25) protein is Succinyl-CoA:3-ketoacid coenzyme A transferase subunit A (lpsI).